The sequence spans 247 residues: tRNA pseudouridine synthase A (247 aa).

Aspartate 53 acts as the Nucleophile in catalysis. Residue tyrosine 112 coordinates substrate.

This sequence belongs to the tRNA pseudouridine synthase TruA family. Homodimer.

It catalyses the reaction uridine(38/39/40) in tRNA = pseudouridine(38/39/40) in tRNA. Formation of pseudouridine at positions 38, 39 and 40 in the anticodon stem and loop of transfer RNAs. The protein is tRNA pseudouridine synthase A of Anaplasma marginale (strain St. Maries).